The sequence spans 575 residues: Probable cytochrome P450 514A1 (575 aa).

The helical transmembrane segment at 4–24 (IFTIILTITILVLSLILKDLL) threads the bilayer. C448 provides a ligand contact to heme.

It belongs to the cytochrome P450 family. Requires heme as cofactor.

The protein resides in the membrane. The sequence is that of Probable cytochrome P450 514A1 (cyp514A1) from Dictyostelium discoideum (Social amoeba).